Reading from the N-terminus, the 354-residue chain is Rhodopsin (354 aa).

Residues 1–36 (MNGTEGPNFYVPMSNKTGIVRSPFEYPQYYLAEPWK) are Extracellular-facing. N-linked (GlcNAc...) asparagine glycans are attached at residues Asn-2 and Asn-15. A helical membrane pass occupies residues 37–61 (YSVLAAYMFLLILLGLPINFMTLYV). The Cytoplasmic segment spans residues 62–73 (TIQHKKLRTPLN). The helical transmembrane segment at 74 to 96 (YILLNLAFANHFMVLCGFTITMY) threads the bilayer. The Extracellular segment spans residues 97 to 110 (TSLHGYFVFGQTGC). A disulfide bond links Cys-110 and Cys-187. Residues 111–133 (YFEGFFATLGGEIALWSLVVLAI) traverse the membrane as a helical segment. The short motif at 134-136 (ERY) is the 'Ionic lock' involved in activated form stabilization element. Topologically, residues 134–152 (ERYIVVCKPMSNFRFGENH) are cytoplasmic. Residues 153-173 (AMMGVAFTWIMALACAVPPLF) traverse the membrane as a helical segment. Residues 174–202 (GWSRYIPEGMQCSCGVDYYTLKPEVNNES) lie on the Extracellular side of the membrane. Residues 203 to 224 (FVIYMFVVHFLIPLIIISFCYG) traverse the membrane as a helical segment. The Cytoplasmic portion of the chain corresponds to 225-252 (RLVCTVKEAAAQQQESATTQKAEKEVTR). A helical membrane pass occupies residues 253–274 (MVVIMVIFFLICWVPYAYVAFY). At 275–286 (IFTHQGSEFGPI) the chain is on the extracellular side. The chain crosses the membrane as a helical span at residues 287–308 (FMTVPAFFAKSSAIYNPVIYIM). Lys-296 carries the N6-(retinylidene)lysine modification. Residues 309–354 (LNKQFRNCMITTLCCGKNPFGDEDASSAATSKTEATSVSTSQVSPA) are Cytoplasmic-facing. S-palmitoyl cysteine attachment occurs at residues Cys-322 and Cys-323. Residues 331–354 (EDASSAATSKTEATSVSTSQVSPA) are disordered. Residues 334 to 354 (SSAATSKTEATSVSTSQVSPA) show a composition bias toward low complexity.

It belongs to the G-protein coupled receptor 1 family. Opsin subfamily. Post-translationally, contains one covalently linked retinal chromophore. Upon light absorption, the covalently bound 11-cis-retinal is converted to all-trans-retinal. After hydrolysis of the Schiff base and release of the covalently bound all-trans-retinal, active rhodopsin is regenerated by binding of a fresh molecule of 11-cis-retinal. As to expression, retina. Localized in the ventral part of the retina.

It is found in the membrane. Its subcellular location is the cell projection. The protein resides in the cilium. It localises to the photoreceptor outer segment. Functionally, photoreceptor required for image-forming vision at low light intensity. Required for photoreceptor cell viability after birth. May use a mixture of retinal and 3-dehydroretinal as visual pigment. Light-induced isomerization of 11-cis to all-trans retinal triggers a conformational change that activates signaling via G-proteins. Subsequent receptor phosphorylation mediates displacement of the bound G-protein alpha subunit by arrestin and terminates signaling. This is Rhodopsin (RHO) from Aquarana catesbeiana (American bullfrog).